The following is a 781-amino-acid chain: Probable aminopeptidase 2 (781 aa).

Residues Glu-105 and 237 to 241 contribute to the substrate site; that span reads GAMEN. His-272 serves as a coordination point for Zn(2+). Residue Glu-273 is the Proton acceptor of the active site. The Zn(2+) site is built by His-276 and Glu-295.

It belongs to the peptidase M1 family. Requires Zn(2+) as cofactor.

It localises to the cytoplasm. The chain is Probable aminopeptidase 2 (ape2) from Sulfurisphaera tokodaii (strain DSM 16993 / JCM 10545 / NBRC 100140 / 7) (Sulfolobus tokodaii).